Reading from the N-terminus, the 338-residue chain is Malate dehydrogenase, mitochondrial (338 aa).

The N-terminal 24 residues, 1–24 (MLSALARPVGAALRRSFSTSAQNN), are a transit peptide targeting the mitochondrion. Residues 31–37 (GASGGIG) and Asp57 each bind NAD(+). A glycan (O-linked (GlcNAc) serine) is linked at Ser33. N6-acetyllysine; alternate is present on residues Lys78 and Lys91. 2 positions are modified to N6-succinyllysine; alternate: Lys78 and Lys91. Substrate-binding residues include Arg104 and Arg110. NAD(+) is bound by residues Asn117 and 140–142 (ISN). Asn142 is a binding site for substrate. Position 165 is an N6-acetyllysine (Lys165). A substrate-binding site is contributed by Arg176. Lys185 carries the post-translational modification N6-acetyllysine; alternate. The residue at position 185 (Lys185) is an N6-succinyllysine; alternate. His200 acts as the Proton acceptor in catalysis. Lys203 carries the N6-succinyllysine modification. N6-acetyllysine; alternate is present on residues Lys215 and Lys239. Residues Lys215 and Lys239 each carry the N6-succinyllysine; alternate modification. At Lys239 the chain carries N6-malonyllysine; alternate. Ser246 is modified (phosphoserine). Met251 contacts NAD(+). An N6-succinyllysine modification is found at Lys269. N6-acetyllysine; alternate occurs at positions 296, 301, 307, 314, and 324. Lys296, Lys301, Lys307, Lys314, and Lys324 each carry N6-succinyllysine; alternate. Lys307 is modified (N6-malonyllysine; alternate). Ser326 bears the Phosphoserine mark. Lys328, Lys329, and Lys335 each carry N6-acetyllysine; alternate. Residue Lys328 is modified to N6-succinyllysine; alternate. Residue Lys329 is modified to N6-malonyllysine; alternate. Residue Lys335 is modified to N6-succinyllysine; alternate.

Belongs to the LDH/MDH superfamily. MDH type 1 family. Homodimer. In terms of processing, acetylation is enhanced after treatment either with trichostin A (TCA) or with nicotinamide (NAM) with the appearance of tri- and tetraacetylations. Glucose also increases acetylation. Expressed in flagella of epididymal sperm.

It is found in the mitochondrion matrix. The catalysed reaction is (S)-malate + NAD(+) = oxaloacetate + NADH + H(+). With respect to regulation, enzyme activity is enhanced by acetylation. This chain is Malate dehydrogenase, mitochondrial (Mdh2), found in Rattus norvegicus (Rat).